We begin with the raw amino-acid sequence, 481 residues long: ATP synthase subunit beta (481 aa).

An ATP-binding site is contributed by 167–174; it reads GGAGVGKT.

It belongs to the ATPase alpha/beta chains family. In terms of assembly, F-type ATPases have 2 components, CF(1) - the catalytic core - and CF(0) - the membrane proton channel. CF(1) has five subunits: alpha(3), beta(3), gamma(1), delta(1), epsilon(1). CF(0) has three main subunits: a(1), b(2) and c(9-12). The alpha and beta chains form an alternating ring which encloses part of the gamma chain. CF(1) is attached to CF(0) by a central stalk formed by the gamma and epsilon chains, while a peripheral stalk is formed by the delta and b chains.

It localises to the cell membrane. The enzyme catalyses ATP + H2O + 4 H(+)(in) = ADP + phosphate + 5 H(+)(out). Functionally, produces ATP from ADP in the presence of a proton gradient across the membrane. The catalytic sites are hosted primarily by the beta subunits. The protein is ATP synthase subunit beta of Corynebacterium diphtheriae (strain ATCC 700971 / NCTC 13129 / Biotype gravis).